Here is a 486-residue protein sequence, read N- to C-terminus: UDP-N-acetylglucosamine pyrophosphorylase (486 aa).

A Substrate binding motif is present at residues 109–112 (MAGG). UTP is bound by residues 109–112 (MAGG), Lys-123, Gln-199, and Gly-226. Asn-227 provides a ligand contact to substrate. Asp-257 is a UTP binding site. A Substrate binding motif is present at residues 309 to 310 (EY). Lys-389 lines the UTP pocket. Lys-421 serves as a coordination point for substrate.

The protein belongs to the UDPGP type 1 family.

Its subcellular location is the cytoplasm. The enzyme catalyses N-acetyl-alpha-D-glucosamine 1-phosphate + UTP + H(+) = UDP-N-acetyl-alpha-D-glucosamine + diphosphate. It participates in nucleotide-sugar biosynthesis; UDP-N-acetyl-alpha-D-glucosamine biosynthesis; UDP-N-acetyl-alpha-D-glucosamine from N-acetyl-alpha-D-glucosamine 1-phosphate: step 1/1. The sequence is that of UDP-N-acetylglucosamine pyrophosphorylase (UAP1) from Candida albicans (Yeast).